A 279-amino-acid polypeptide reads, in one-letter code: MKIILADSAGFCFGVKRATNLAFDAAEQFEHICSLGPIIHSPQVVKKLEEKGIKVIRKVEDIDHGAVIIRSHGITAEELDIIHDRELKIVDATCPFVKKAQDYATMLCNEGYSVVLVGEKDHPEVQGIISYTRGGEVFVVADCKEAQRLPNRPKLGIVAQTTQSFKNLQQIADICLGKSKEVRIFNTICDATSVRQNEARKIACEADLMLVVGGFNSANTTRLAQICQEIQPRTFHVETVEQIQDGWFEGVECVGITAGASTPRWIIDQVVERVSDMSK.

Residue cysteine 12 coordinates [4Fe-4S] cluster. (2E)-4-hydroxy-3-methylbut-2-enyl diphosphate-binding residues include histidine 40 and histidine 72. Positions 40 and 72 each coordinate dimethylallyl diphosphate. The isopentenyl diphosphate site is built by histidine 40 and histidine 72. Cysteine 94 is a binding site for [4Fe-4S] cluster. Position 122 (histidine 122) interacts with (2E)-4-hydroxy-3-methylbut-2-enyl diphosphate. A dimethylallyl diphosphate-binding site is contributed by histidine 122. An isopentenyl diphosphate-binding site is contributed by histidine 122. Glutamate 124 serves as the catalytic Proton donor. A (2E)-4-hydroxy-3-methylbut-2-enyl diphosphate-binding site is contributed by threonine 161. Cysteine 189 contributes to the [4Fe-4S] cluster binding site. Positions 217, 219, and 261 each coordinate (2E)-4-hydroxy-3-methylbut-2-enyl diphosphate. Serine 217, asparagine 219, and serine 261 together coordinate dimethylallyl diphosphate. The isopentenyl diphosphate site is built by serine 217, asparagine 219, and serine 261.

It belongs to the IspH family. [4Fe-4S] cluster is required as a cofactor.

The enzyme catalyses isopentenyl diphosphate + 2 oxidized [2Fe-2S]-[ferredoxin] + H2O = (2E)-4-hydroxy-3-methylbut-2-enyl diphosphate + 2 reduced [2Fe-2S]-[ferredoxin] + 2 H(+). It carries out the reaction dimethylallyl diphosphate + 2 oxidized [2Fe-2S]-[ferredoxin] + H2O = (2E)-4-hydroxy-3-methylbut-2-enyl diphosphate + 2 reduced [2Fe-2S]-[ferredoxin] + 2 H(+). Its pathway is isoprenoid biosynthesis; dimethylallyl diphosphate biosynthesis; dimethylallyl diphosphate from (2E)-4-hydroxy-3-methylbutenyl diphosphate: step 1/1. It participates in isoprenoid biosynthesis; isopentenyl diphosphate biosynthesis via DXP pathway; isopentenyl diphosphate from 1-deoxy-D-xylulose 5-phosphate: step 6/6. Catalyzes the conversion of 1-hydroxy-2-methyl-2-(E)-butenyl 4-diphosphate (HMBPP) into a mixture of isopentenyl diphosphate (IPP) and dimethylallyl diphosphate (DMAPP). Acts in the terminal step of the DOXP/MEP pathway for isoprenoid precursor biosynthesis. In Syntrophotalea carbinolica (strain DSM 2380 / NBRC 103641 / GraBd1) (Pelobacter carbinolicus), this protein is 4-hydroxy-3-methylbut-2-enyl diphosphate reductase.